Reading from the N-terminus, the 199-residue chain is Dephospho-CoA kinase (199 aa).

The DPCK domain maps to 11–199 (RIGLTGGIAS…DLHDQLDALL (189 aa)). 19 to 24 (ASGKSS) contacts ATP.

It belongs to the CoaE family.

The protein resides in the cytoplasm. It catalyses the reaction 3'-dephospho-CoA + ATP = ADP + CoA + H(+). It functions in the pathway cofactor biosynthesis; coenzyme A biosynthesis; CoA from (R)-pantothenate: step 5/5. Functionally, catalyzes the phosphorylation of the 3'-hydroxyl group of dephosphocoenzyme A to form coenzyme A. The protein is Dephospho-CoA kinase of Synechococcus sp. (strain CC9902).